Consider the following 217-residue polypeptide: Phosphoenolpyruvate guanylyltransferase (217 aa).

Positions 150, 165, and 168 each coordinate phosphoenolpyruvate.

This sequence belongs to the CofC family.

The enzyme catalyses phosphoenolpyruvate + GTP + H(+) = enolpyruvoyl-2-diphospho-5'-guanosine + diphosphate. It functions in the pathway cofactor biosynthesis; coenzyme F420 biosynthesis. In terms of biological role, guanylyltransferase that catalyzes the activation of phosphoenolpyruvate (PEP) as enolpyruvoyl-2-diphospho-5'-guanosine, via the condensation of PEP with GTP. It is involved in the biosynthesis of coenzyme F420, a hydride carrier cofactor. This Mycobacterium marinum (strain ATCC BAA-535 / M) protein is Phosphoenolpyruvate guanylyltransferase.